The following is a 109-amino-acid chain: Flagellar hook-basal body complex protein FliE (109 aa).

Belongs to the FliE family.

It is found in the bacterial flagellum basal body. The chain is Flagellar hook-basal body complex protein FliE from Nitrosomonas eutropha (strain DSM 101675 / C91 / Nm57).